The primary structure comprises 237 residues: Ribose-5-phosphate isomerase A (237 aa).

Substrate is bound by residues 30 to 33 (SGST), 87 to 90 (DGAD), and 100 to 103 (KGGG). The active-site Proton acceptor is the E109. Position 127 (K127) interacts with substrate.

It belongs to the ribose 5-phosphate isomerase family. As to quaternary structure, homodimer.

It catalyses the reaction aldehydo-D-ribose 5-phosphate = D-ribulose 5-phosphate. It participates in carbohydrate degradation; pentose phosphate pathway; D-ribose 5-phosphate from D-ribulose 5-phosphate (non-oxidative stage): step 1/1. Catalyzes the reversible conversion of ribose-5-phosphate to ribulose 5-phosphate. The polypeptide is Ribose-5-phosphate isomerase A (Synechococcus sp. (strain RCC307)).